The primary structure comprises 210 residues: Chloramphenicol acetyltransferase (210 aa).

H79 is an active-site residue.

Belongs to the transferase hexapeptide repeat family.

The catalysed reaction is chloramphenicol + acetyl-CoA = chloramphenicol 3-acetate + CoA. Its function is as follows. This enzyme is an effector of chloramphenicol resistance in bacteria. This chain is Chloramphenicol acetyltransferase (catB2), found in Escherichia coli.